Consider the following 224-residue polypeptide: Peroxiredoxin-6 (224 aa).

The 165-residue stretch at 5–169 (LLLGDEAPNF…ILRVIISLQL (165 aa)) folds into the Thioredoxin domain. The segment at 31 to 40 (DSWGILFSHP) is required and sufficient for targeting to lysosomes and lamellar bodies. At Thr-44 the chain carries Phosphothreonine. The Cysteine sulfenic acid (-SOH) intermediate; for peroxidase activity role is filled by Cys-47. N6-acetyllysine is present on Lys-63. Phosphotyrosine is present on Tyr-89. Catalysis depends on Asp-140, which acts as the For phospholipase activity. The residue at position 177 (Thr-177) is a Phosphothreonine; by MAPK. An N6-acetyllysine; alternate modification is found at Lys-209. N6-succinyllysine; alternate is present on Lys-209.

Belongs to the peroxiredoxin family. Prx6 subfamily. In terms of assembly, homodimer. Interacts with GSTP1; mediates PRDX6 glutathionylation and regeneration. Interacts with APEX1. Interacts with STH. May interact with FAM168B. May interact with HTR2A. Irreversibly inactivated by overoxidation of Cys-47 to sulfinic acid (Cys-SO(2)H) and sulfonic acid (Cys-SO(3)H) forms upon oxidative stress. Post-translationally, phosphorylation at Thr-177 by MAP kinases increases the phospholipase activity of the enzyme. The phosphorylated form exhibits a greater lysophosphatidylcholine acyltransferase activity compared to the non-phosphorylated form.

Its subcellular location is the cytoplasm. It localises to the lysosome. It carries out the reaction a hydroperoxide + 2 glutathione = an alcohol + glutathione disulfide + H2O. The catalysed reaction is a 1,2-diacyl-sn-glycero-3-phosphocholine + H2O = a 1-acyl-sn-glycero-3-phosphocholine + a fatty acid + H(+). The enzyme catalyses a 1-acyl-sn-glycero-3-phosphocholine + an acyl-CoA = a 1,2-diacyl-sn-glycero-3-phosphocholine + CoA. It catalyses the reaction 1-hexadecanoyl-sn-glycero-3-phosphocholine + hexadecanoyl-CoA = 1,2-dihexadecanoyl-sn-glycero-3-phosphocholine + CoA. It carries out the reaction 1,2-dihexadecanoyl-sn-glycero-3-phosphocholine + H2O = 1-hexadecanoyl-sn-glycero-3-phosphocholine + hexadecanoate + H(+). In terms of biological role, thiol-specific peroxidase that catalyzes the reduction of hydrogen peroxide and organic hydroperoxides to water and alcohols, respectively. Can reduce H(2)O(2) and short chain organic, fatty acid, and phospholipid hydroperoxides. Also has phospholipase activity, and can therefore either reduce the oxidized sn-2 fatty acyl group of phospholipids (peroxidase activity) or hydrolyze the sn-2 ester bond of phospholipids (phospholipase activity). These activities are dependent on binding to phospholipids at acidic pH and to oxidized phospholipds at cytosolic pH. Plays a role in cell protection against oxidative stress by detoxifying peroxides and in phospholipid homeostasis. Exhibits acyl-CoA-dependent lysophospholipid acyltransferase which mediates the conversion of lysophosphatidylcholine (1-acyl-sn-glycero-3-phosphocholine or LPC) into phosphatidylcholine (1,2-diacyl-sn-glycero-3-phosphocholine or PC). Shows a clear preference for LPC as the lysophospholipid and for palmitoyl CoA as the fatty acyl substrate. This chain is Peroxiredoxin-6 (PRDX6), found in Sus scrofa (Pig).